We begin with the raw amino-acid sequence, 185 residues long: uncharacterized protein (185 aa).

This is an uncharacterized protein from Bacillus subtilis (strain 168).